The chain runs to 171 residues: 3-hydroxydecanoyl-[acyl-carrier-protein] dehydratase (171 aa).

H70 is a catalytic residue.

This sequence belongs to the thioester dehydratase family. FabA subfamily. As to quaternary structure, homodimer.

It localises to the cytoplasm. It catalyses the reaction a (3R)-hydroxyacyl-[ACP] = a (2E)-enoyl-[ACP] + H2O. The catalysed reaction is (3R)-hydroxydecanoyl-[ACP] = (2E)-decenoyl-[ACP] + H2O. The enzyme catalyses (2E)-decenoyl-[ACP] = (3Z)-decenoyl-[ACP]. It participates in lipid metabolism; fatty acid biosynthesis. Functionally, necessary for the introduction of cis unsaturation into fatty acids. Catalyzes the dehydration of (3R)-3-hydroxydecanoyl-ACP to E-(2)-decenoyl-ACP and then its isomerization to Z-(3)-decenoyl-ACP. Can catalyze the dehydratase reaction for beta-hydroxyacyl-ACPs with saturated chain lengths up to 16:0, being most active on intermediate chain length. The chain is 3-hydroxydecanoyl-[acyl-carrier-protein] dehydratase from Vibrio campbellii (strain ATCC BAA-1116).